The sequence spans 439 residues: Large ribosomal subunit protein mL44 (439 aa).

Disordered stretches follow at residues 39 to 73 (QSTAALAQHDASHDLNNDRFPPLEPLPPAAESLPS) and 247 to 282 (KAMEEQDQDKTPDEEEAEMVANEQDQDVSYDRYGNP). The span at 247-257 (KAMEEQDQDKT) shows a compositional bias: basic and acidic residues. Positions 258–274 (PDEEEAEMVANEQDQDV) are enriched in acidic residues.

This sequence belongs to the ribonuclease III family. Mitochondrion-specific ribosomal protein mL44 subfamily. Component of the mitochondrial large ribosomal subunit (mt-LSU). Mature N.crassa 74S mitochondrial ribosomes consist of a small (37S) and a large (54S) subunit. The 37S small subunit contains a 16S ribosomal RNA (16S mt-rRNA) and 32 different proteins. The 54S large subunit contains a 23S rRNA (23S mt-rRNA) and 42 different proteins. mL44 forms a heterodimer with mL57 and stabilizes rRNA expansion segments 1/2 at a membrane-facing protuberance close to the point of attachment of the ribosome to the translocon in the membrane.

It is found in the mitochondrion. Component of the mitochondrial ribosome (mitoribosome), a dedicated translation machinery responsible for the synthesis of mitochondrial genome-encoded proteins, including at least some of the essential transmembrane subunits of the mitochondrial respiratory chain. The mitoribosomes are attached to the mitochondrial inner membrane and translation products are cotranslationally integrated into the membrane. This chain is Large ribosomal subunit protein mL44 (mrpl3), found in Neurospora crassa (strain ATCC 24698 / 74-OR23-1A / CBS 708.71 / DSM 1257 / FGSC 987).